A 375-amino-acid polypeptide reads, in one-letter code: Probable RNA 3'-terminal phosphate cyclase-like protein (375 aa).

This sequence belongs to the RNA 3'-terminal cyclase family. Type 2 subfamily.

The protein resides in the nucleus. The protein localises to the nucleolus. Its function is as follows. Does not have cyclase activity. Plays a role in 40S-ribosomal-subunit biogenesis in the early pre-rRNA processing steps at sites A0, A1 and A2 that are required for proper maturation of the 18S RNA. The protein is Probable RNA 3'-terminal phosphate cyclase-like protein of Arabidopsis thaliana (Mouse-ear cress).